The chain runs to 171 residues: AAF/I fimbrial subunit (171 aa).

Residues 1 to 28 (MKTLKNMRRKNLCITLGLVSLLSRGANA) form the signal peptide.

It localises to the fimbrium. The chain is AAF/I fimbrial subunit (aggA) from Escherichia coli.